Consider the following 460-residue polypeptide: Chromosomal replication initiator protein DnaA (460 aa).

The domain I, interacts with DnaA modulators stretch occupies residues 1 to 84 (MAVSLWQQCI…RFDIGSRPSA (84 aa)). The tract at residues 84–123 (AKKPEPAPVAAVRVPNPQTKASVGTSFNTTEPVANANHRS) is domain II. The tract at residues 124–340 (NINPTYQFDN…GALNRVIANA (217 aa)) is domain III, AAA+ region. ATP contacts are provided by Gly168, Gly170, Lys171, and Thr172. The interval 341–460 (NFTGRPITID…YANLIRTLSS (120 aa)) is domain IV, binds dsDNA.

This sequence belongs to the DnaA family. As to quaternary structure, oligomerizes as a right-handed, spiral filament on DNA at oriC.

It is found in the cytoplasm. In terms of biological role, plays an essential role in the initiation and regulation of chromosomal replication. ATP-DnaA binds to the origin of replication (oriC) to initiate formation of the DNA replication initiation complex once per cell cycle. Binds the DnaA box (a 9 base pair repeat at the origin) and separates the double-stranded (ds)DNA. Forms a right-handed helical filament on oriC DNA; dsDNA binds to the exterior of the filament while single-stranded (ss)DNA is stabiized in the filament's interior. The ATP-DnaA-oriC complex binds and stabilizes one strand of the AT-rich DNA unwinding element (DUE), permitting loading of DNA polymerase. After initiation quickly degrades to an ADP-DnaA complex that is not apt for DNA replication. Binds acidic phospholipids. This Shewanella sp. (strain ANA-3) protein is Chromosomal replication initiator protein DnaA.